A 138-amino-acid polypeptide reads, in one-letter code: Small ribosomal subunit protein uS17 (138 aa).

Composition is skewed to basic and acidic residues over residues 1–18 and 43–55; these read MSEEERNRGAEPEERAEA and AFDRDAGKVQKDT. A disordered region spans residues 1 to 62; sequence MSEEERNRGA…KDTRRGRRKE (62 aa).

The protein belongs to the universal ribosomal protein uS17 family. Part of the 30S ribosomal subunit.

Functionally, one of the primary rRNA binding proteins, it binds specifically to the 5'-end of 16S ribosomal RNA. This is Small ribosomal subunit protein uS17 from Rubrobacter xylanophilus (strain DSM 9941 / JCM 11954 / NBRC 16129 / PRD-1).